Reading from the N-terminus, the 199-residue chain is Cytochrome c-type cyt cy (199 aa).

The chain crosses the membrane as a helical span at residues 7-27; sequence ITKIGVTLFAVALFYGFIYML. The span at 69–80 shows a compositional bias: low complexity; it reads AAETAEAAAPAE. A disordered region spans residues 69-93; the sequence is AAETAEAAAPAEPAAPPPPAYVEVD. The heme c site is built by Cys-112, Cys-115, His-116, and Met-148.

Post-translationally, binds 1 heme c group covalently per subunit.

It is found in the cell membrane. In terms of biological role, electron transfer pathways that operates during photosynthesis. The sequence is that of Cytochrome c-type cyt cy (cycY) from Rhodobacter capsulatus (strain ATCC BAA-309 / NBRC 16581 / SB1003).